The sequence spans 138 residues: Large ribosomal subunit protein uL16 (138 aa).

The protein belongs to the universal ribosomal protein uL16 family. As to quaternary structure, part of the 50S ribosomal subunit.

Functionally, binds 23S rRNA and is also seen to make contacts with the A and possibly P site tRNAs. The protein is Large ribosomal subunit protein uL16 of Nitrosomonas europaea (strain ATCC 19718 / CIP 103999 / KCTC 2705 / NBRC 14298).